Here is a 484-residue protein sequence, read N- to C-terminus: tRNA-2-methylthio-N(6)-dimethylallyladenosine synthase (484 aa).

Residues G36–E153 enclose the MTTase N-terminal domain. Residues C45, C82, C116, C190, C194, and C197 each coordinate [4Fe-4S] cluster. Residues R176–S415 enclose the Radical SAM core domain. The region spanning Q416 to L479 is the TRAM domain. Residues E428–F450 are disordered.

This sequence belongs to the methylthiotransferase family. MiaB subfamily. As to quaternary structure, monomer. [4Fe-4S] cluster is required as a cofactor.

Its subcellular location is the cytoplasm. It carries out the reaction N(6)-dimethylallyladenosine(37) in tRNA + (sulfur carrier)-SH + AH2 + 2 S-adenosyl-L-methionine = 2-methylsulfanyl-N(6)-dimethylallyladenosine(37) in tRNA + (sulfur carrier)-H + 5'-deoxyadenosine + L-methionine + A + S-adenosyl-L-homocysteine + 2 H(+). Catalyzes the methylthiolation of N6-(dimethylallyl)adenosine (i(6)A), leading to the formation of 2-methylthio-N6-(dimethylallyl)adenosine (ms(2)i(6)A) at position 37 in tRNAs that read codons beginning with uridine. The sequence is that of tRNA-2-methylthio-N(6)-dimethylallyladenosine synthase from Xanthomonas oryzae pv. oryzae (strain MAFF 311018).